Here is a 470-residue protein sequence, read N- to C-terminus: Protein naked cuticle homolog 1 (470 aa).

Disordered regions lie at residues 1 to 21 and 90 to 114; these read MGKL…PEGD and PPEK…PCPG. Gly2 is lipidated: N-myristoyl glycine. Positions 92 to 109 are enriched in basic and acidic residues; that stretch reads EKTDGLGSGDEKKMERVS. Positions 125–190 are interaction with DVL1, DVL2 and DVL3; the sequence is QCDVSMEEDS…LRVKLTVAPD (66 aa). One can recognise an EF-hand domain in the interval 131–166; sequence EEDSRQEWTFTLYDFDNNGKVTREDITSLLHTIYEV. Positions 144, 146, 148, 150, and 155 each coordinate Ca(2+). Residues 192–205 show a composition bias toward polar residues; sequence SQSKRSVLVNQADL. Disordered regions lie at residues 192–228, 271–314, 337–357, and 446–470; these read SQSK…KKQR, QFGP…QGVD, GTQD…KSVG, and GQPV…FYQT. The segment covering 210-227 has biased composition (basic and acidic residues); sequence PRAETKPTEDLRSWEKKQ. The segment covering 271–281 has biased composition (polar residues); it reads QFGPGSPSVAQ. The segment covering 452 to 470 has biased composition (basic residues); sequence HEHHHHHEHHHHYHHFYQT.

The protein belongs to the NKD family. Interacts with DVL1, DVL2, DVL3 and PPP2R3A. In terms of tissue distribution, expressed in colon, heart, kidney, leukocyte, liver, lung, ovary, pancreas, placenta, prostate, skeletal muscle, small intestine and spleen.

It localises to the cell membrane. Its subcellular location is the cytoplasm. In terms of biological role, cell autonomous antagonist of the canonical Wnt signaling pathway. May activate a second Wnt signaling pathway that controls planar cell polarity. The chain is Protein naked cuticle homolog 1 (NKD1) from Homo sapiens (Human).